The primary structure comprises 968 residues: RNA polymerase-associated protein RapA (968 aa).

A Helicase ATP-binding domain is found at 164 to 334; the sequence is DVGRRHAPRV…FARLRLLDPN (171 aa). 177–184 contributes to the ATP binding site; it reads DEVGLGKT. Residues 280-283 carry the DEAH box motif; it reads DEAH. In terms of domain architecture, Helicase C-terminal spans 490 to 662; it reads RVEWLMGYLT…YLASPDQTEG (173 aa).

Belongs to the SNF2/RAD54 helicase family. RapA subfamily. As to quaternary structure, interacts with the RNAP. Has a higher affinity for the core RNAP than for the holoenzyme. Its ATPase activity is stimulated by binding to RNAP.

Transcription regulator that activates transcription by stimulating RNA polymerase (RNAP) recycling in case of stress conditions such as supercoiled DNA or high salt concentrations. Probably acts by releasing the RNAP, when it is trapped or immobilized on tightly supercoiled DNA. Does not activate transcription on linear DNA. Probably not involved in DNA repair. The polypeptide is RNA polymerase-associated protein RapA (Shigella boydii serotype 4 (strain Sb227)).